Reading from the N-terminus, the 247-residue chain is Coproheme decarboxylase (247 aa).

Fe-coproporphyrin III-binding positions include Arg-129, 143–147 (YPMDK), His-170, Gln-183, and Ser-221. Tyr-143 is an active-site residue.

It belongs to the ChdC family. Type 1 subfamily. Requires Fe-coproporphyrin III as cofactor.

It catalyses the reaction Fe-coproporphyrin III + 2 H2O2 + 2 H(+) = heme b + 2 CO2 + 4 H2O. The catalysed reaction is Fe-coproporphyrin III + H2O2 + H(+) = harderoheme III + CO2 + 2 H2O. It carries out the reaction harderoheme III + H2O2 + H(+) = heme b + CO2 + 2 H2O. It functions in the pathway porphyrin-containing compound metabolism; protoheme biosynthesis. In terms of biological role, involved in coproporphyrin-dependent heme b biosynthesis. Catalyzes the decarboxylation of Fe-coproporphyrin III (coproheme) to heme b (protoheme IX), the last step of the pathway. The reaction occurs in a stepwise manner with a three-propionate intermediate. The protein is Coproheme decarboxylase of Bacillus cytotoxicus (strain DSM 22905 / CIP 110041 / 391-98 / NVH 391-98).